The sequence spans 368 residues: L-lactate oxidase (368 aa).

The 356-residue stretch at 13 to 368 (VNAIDVLDLA…KQMKVKTTFA (356 aa)) folds into the FMN hydroxy acid dehydrogenase domain. Tyrosine 39 contacts pyruvate. Residues 92–94 (PIA), serine 121, and glutamine 143 contribute to the FMN site. Tyrosine 145 serves as a coordination point for pyruvate. FMN is bound at residue threonine 171. Arginine 180 provides a ligand contact to pyruvate. Residues lysine 239 and serine 261 each coordinate FMN. 2 residues coordinate pyruvate: histidine 263 and arginine 266. Residue histidine 263 is the Proton acceptor of the active site. FMN contacts are provided by residues 294 to 298 (DGGVQ) and arginine 318.

The protein belongs to the FMN-dependent alpha-hydroxy acid dehydrogenase family. In terms of assembly, homotetramer. FMN serves as cofactor.

It catalyses the reaction (S)-lactate + O2 = pyruvate + H2O2. The catalysed reaction is 2-hydroxyoctanoate + O2 = 2-oxooctanoate + H2O2. Catalyzes the oxidation of (S)-lactate (L-lactate) to pyruvate, with a reduction of O2 to H2O2. To a lesser extent is also able to use 2-hydroxyoctanoate as substrate. May be involved in the utilization of L-lactate as an energy source for growth. The chain is L-lactate oxidase from Lacticaseibacillus rhamnosus (strain LMS2-1).